We begin with the raw amino-acid sequence, 460 residues long: Ankyrin repeat and MYND domain-containing protein 2 (460 aa).

ANK repeat units follow at residues 45-74, 79-108, and 159-188; these read HGMT…DVNC, HGYT…ETDV, and KLAG…NPLL. Zn(2+) contacts are provided by Cys-320, Cys-323, Cys-332, Cys-335, Cys-341, Cys-345, His-353, and Cys-357. The segment at 320-357 adopts an MYND-type zinc-finger fold; that stretch reads CTTCGEKGADKRCSVCKVVMYCDQNCQKTHWFTHKKVC. Basic and acidic residues-rich tracts occupy residues 371–387 and 425–436; these read AAKE…KDEA and ELTKEPEARAPR. Residues 371 to 460 are disordered; the sequence is AAKEKRRQEK…ALQKIQDSEE (90 aa).

Its subcellular location is the cell projection. The protein resides in the cilium. Its function is as follows. May be involved in the trafficking of signaling proteins to the cilia. This chain is Ankyrin repeat and MYND domain-containing protein 2 (ANKMY2), found in Gallus gallus (Chicken).